The sequence spans 434 residues: Pectate lyase (434 aa).

A signal peptide spans 1–22; it reads MKAAQFFLYSLLFFASAALSSA. 2 N-linked (GlcNAc...) asparagine glycosylation sites follow: Asn68 and Asn97. Ca(2+)-binding residues include Asp232, Asp256, and Asp260. The active site involves Arg312.

It belongs to the polysaccharide lyase 1 family. The cofactor is Ca(2+).

It carries out the reaction Eliminative cleavage of (1-&gt;4)-alpha-D-galacturonan to give oligosaccharides with 4-deoxy-alpha-D-galact-4-enuronosyl groups at their non-reducing ends.. It participates in glycan metabolism; pectin degradation; 2-dehydro-3-deoxy-D-gluconate from pectin: step 2/5. The chain is Pectate lyase from Lilium longiflorum (Trumpet lily).